Consider the following 558-residue polypeptide: Factor VII-activating protease (558 aa).

A signal peptide spans 1 to 23 (MFVRMLVFRVLLLIALVGKSVIG). 3 EGF-like domains span residues 71–107 (DDDP…SRCQ), 109–146 (AQNK…PDCS), and 148–186 (VLPA…KFCE). 18 disulfide bridges follow: Cys75–Cys86, Cys80–Cys95, Cys97–Cys106, Cys113–Cys123, Cys118–Cys134, Cys136–Cys145, Cys152–Cys163, Cys157–Cys174, Cys176–Cys185, Cys192–Cys274, Cys213–Cys255, Cys244–Cys269, Cys299–Cys433, Cys345–Cys361, Cys353–Cys422, Cys445–Cys513, Cys475–Cys491, and Cys503–Cys531. Residues 191–274 (DCYVGDGYSY…KWEYCDVTVC (84 aa)) form the Kringle domain. The Peptidase S1 domain occupies 312 to 553 (IYGGFKSTAG…FLNWIKTTMH (242 aa)). Catalysis depends on charge relay system residues His360 and Asp409. Ser507 (charge relay system) is an active-site residue.

It belongs to the peptidase S1 family. In terms of assembly, heterodimer; disulfide-linked. Heterodimer of a 50 kDa heavy and a 27 kDa light chain linked by a disulfide bond. Proteolytic cleavage at Gly-23 or Met-27 can give rise to the 50 kDa heavy chain (HC) and cleavage at Arg-311 or Lys-317 can give rise to the 27 kDa light chain (LC). The HC can undergo further proteolytic cleavage giving rise to a 26 kDa fragment. The LC can undergo further proteolytic cleavage at Arg-311 leading to a 17-kDa fragment and at Arg-478 leading to a 8-kDa fragment. As to expression, liver and kidney.

The protein resides in the secreted. Functionally, cleaves the alpha-chain at multiple sites and the beta-chain between 'Lys-53' and 'Lys-54' but not the gamma-chain of fibrinogen and therefore does not initiate the formation of the fibrin clot and does not cause the fibrinolysis directly. It does not cleave (activate) prothrombin and plasminogen but converts the inactive single chain urinary plasminogen activator (pro-urokinase) to the active two chain form. Activates coagulation factor VII. May function as a tumor suppressor negatively regulating cell proliferation and cell migration. The protein is Factor VII-activating protease of Mus musculus (Mouse).